An 82-amino-acid polypeptide reads, in one-letter code: MVTIRLARGGAKKRPFYQVVVTDSRNARDGRFIERVGFFNPIATGQAEALRLDLDRIEHWLGLGATVSDRVSSLIKDAKKAA.

The protein belongs to the bacterial ribosomal protein bS16 family.

This chain is Small ribosomal subunit protein bS16, found in Pectobacterium atrosepticum (strain SCRI 1043 / ATCC BAA-672) (Erwinia carotovora subsp. atroseptica).